Consider the following 187-residue polypeptide: Dirigent protein 6 (187 aa).

A signal peptide spans 1 to 29 (MAFLVEKQLFKALFSFFLLVLLFSDTVLS). Cysteines 40 and 186 form a disulfide. N-linked (GlcNAc...) asparagine glycans are attached at residues Asn59 and Asn123.

This sequence belongs to the plant dirigent protein family. In terms of assembly, homodimer. In terms of tissue distribution, expressed in roots, cotyledon veins, leaf trichomes, flowers, siliques, and meristems. Present in interfascicular/vascular cambia and developing xylem.

It is found in the secreted. It localises to the extracellular space. The protein resides in the apoplast. Dirigent proteins impart stereoselectivity on the phenoxy radical-coupling reaction, yielding optically active lignans from two molecules of coniferyl alcohol in the biosynthesis of lignans, flavonolignans, and alkaloids and thus plays a central role in plant secondary metabolism. Enantiocomplementary dirigent protein that mediates the laccase-catalyzed enantioselective oxidative phenol coupling of (E)-coniferyl alcohol to (-)-pinoresinol. The sequence is that of Dirigent protein 6 (DIR6) from Arabidopsis thaliana (Mouse-ear cress).